A 1594-amino-acid chain; its full sequence is Protein SHORTAGE IN CHIASMATA 1 (1594 aa).

Disordered stretches follow at residues 1148-1180 (DSRS…SKKK), 1239-1283 (APFK…QPDF), 1396-1426 (AADI…YADN), 1491-1523 (RSRA…NTKR), and 1536-1594 (GGNK…LVWK). Positions 1151–1165 (SVMTDSSSSVSSGPD) are enriched in low complexity. 2 stretches are compositionally biased toward basic and acidic residues: residues 1254-1265 (PSKDPERFDKKS) and 1402-1414 (SSER…DSKY). Residues 1577 to 1594 (QSLSYTANGTGQTKLVWK) are compositionally biased toward polar residues.

The protein belongs to the XPF family. As to quaternary structure, interacts with PTD. As to expression, highest levels in young buds, where male meiosis occurs. Also present at low levels in plantlets, leaves, flowers, and roots.

The protein localises to the nucleus. In terms of biological role, essential for the formation of class I meiotic crossovers. This is Protein SHORTAGE IN CHIASMATA 1 from Arabidopsis thaliana (Mouse-ear cress).